A 334-amino-acid chain; its full sequence is MFNGKNILITGGTGSFGKTYTKVLLENYKPNKIIIYSRDELKQFEMSSIFNSNCMRYFIGDVRDKERLSVAMRDVDFVIHAAAMKHVPVAEYNPMECIKTNIHGAQNVIDACFENGVKKCIALSTDKACNPVNLYGATKLASDKLFVAANNIAGNKQTRFSVTRYGNVVGSRGSVVPFFKKLIAQGSKELPITDTRMTRFWISLEDGVKFVLSNFERMHGGEIFIPKIPSMKITNLAHALAPNLSHKIIGIRAGEKLHEIMISSDDSHLTYEFENYYAISPSIKLVDQESDFSINALGEKGQKVKDGFSYSSDNNPQWASEKELLDIINHTEGF.

Residues 13–16, 37–42, 61–62, A81, K85, and 123–124 each bind NADP(+); these read TGSF, SRDELK, DV, and LS. A substrate-binding site is contributed by K85. Residue K127 is part of the active site. 2 residues coordinate NADP(+): Y135 and K139. A substrate-binding site is contributed by N167. Position 168–172 (168–172) interacts with NADP(+); it reads VVGSR. Residues V175, T193, R252, and E255 each contribute to the substrate site.

This sequence belongs to the polysaccharide synthase family. In terms of assembly, homohexamer. The cofactor is NADP(+).

The catalysed reaction is UDP-N-acetyl-alpha-D-glucosamine = UDP-2-acetamido-2,6-dideoxy-beta-L-arabino-hex-4-ulose + H2O. Functionally, catalyzes the first step in the biosynthesis of pseudaminic acid, a sialic-acid-like sugar that is used to modify flagellin. Has both C6 dehydratase and C5 epimerase activities that result in the production of both UDP-2-acetamido-2,6-dideoxy-beta-L-arabino-4-hexulose and UDP-2-acetamido-2,6-dideoxy-alpha-D-xylo-4-hexulose. The protein is UDP-N-acetylglucosamine 4,6-dehydratase (inverting) (pseB) of Campylobacter jejuni subsp. jejuni serotype O:23/36 (strain 81-176).